A 258-amino-acid chain; its full sequence is Imidazole glycerol phosphate synthase subunit HisF (258 aa).

Active-site residues include Asp11 and Asp130.

It belongs to the HisA/HisF family. As to quaternary structure, heterodimer of HisH and HisF.

It localises to the cytoplasm. It carries out the reaction 5-[(5-phospho-1-deoxy-D-ribulos-1-ylimino)methylamino]-1-(5-phospho-beta-D-ribosyl)imidazole-4-carboxamide + L-glutamine = D-erythro-1-(imidazol-4-yl)glycerol 3-phosphate + 5-amino-1-(5-phospho-beta-D-ribosyl)imidazole-4-carboxamide + L-glutamate + H(+). It participates in amino-acid biosynthesis; L-histidine biosynthesis; L-histidine from 5-phospho-alpha-D-ribose 1-diphosphate: step 5/9. IGPS catalyzes the conversion of PRFAR and glutamine to IGP, AICAR and glutamate. The HisF subunit catalyzes the cyclization activity that produces IGP and AICAR from PRFAR using the ammonia provided by the HisH subunit. The protein is Imidazole glycerol phosphate synthase subunit HisF of Xanthobacter autotrophicus (strain ATCC BAA-1158 / Py2).